The chain runs to 802 residues: DNA mismatch repair protein MutS (802 aa).

Residue 617–624 (GPNMGGKS) participates in ATP binding.

This sequence belongs to the DNA mismatch repair MutS family.

Its function is as follows. This protein is involved in the repair of mismatches in DNA. It is possible that it carries out the mismatch recognition step. This protein has a weak ATPase activity. The chain is DNA mismatch repair protein MutS from Buchnera aphidicola subsp. Acyrthosiphon pisum (strain Tuc7).